Reading from the N-terminus, the 658-residue chain is Glycogen debranching enzyme (658 aa).

Catalysis depends on D336, which acts as the Nucleophile. E371 acts as the Proton donor in catalysis. The segment at 459 to 484 (EANGEENRDGTNSNYSDNHGKEGLGG) is disordered.

It belongs to the glycosyl hydrolase 13 family.

It catalyses the reaction Hydrolysis of (1-&gt;6)-alpha-D-glucosidic linkages to branches with degrees of polymerization of three or four glucose residues in limit dextrin.. Its pathway is glycan degradation; glycogen degradation. Removes maltotriose and maltotetraose chains that are attached by 1,6-alpha-linkage to the limit dextrin main chain, generating a debranched limit dextrin. The polypeptide is Glycogen debranching enzyme (Salmonella paratyphi A (strain ATCC 9150 / SARB42)).